The following is a 346-amino-acid chain: Thioredoxin domain-containing protein R362 (346 aa).

The Thioredoxin domain occupies 212 to 345 (LTNLSNTEAN…IVKFIDETMS (134 aa)).

The protein resides in the virion. This is Thioredoxin domain-containing protein R362 from Acanthamoeba polyphaga (Amoeba).